Consider the following 519-residue polypeptide: Glycogen synthase (519 aa).

Positions 1 to 40 are disordered; that stretch reads MISAAVEPHVDAFKPDNREPLTPDFATTGKAPGAQRQHNP. Basic and acidic residues predominate over residues 8–21; it reads PHVDAFKPDNREPL. Residue K57 coordinates ADP-alpha-D-glucose.

Belongs to the glycosyltransferase 1 family. Bacterial/plant glycogen synthase subfamily.

It carries out the reaction [(1-&gt;4)-alpha-D-glucosyl](n) + ADP-alpha-D-glucose = [(1-&gt;4)-alpha-D-glucosyl](n+1) + ADP + H(+). It functions in the pathway glycan biosynthesis; glycogen biosynthesis. Functionally, synthesizes alpha-1,4-glucan chains using ADP-glucose. This Pseudomonas putida (strain ATCC 47054 / DSM 6125 / CFBP 8728 / NCIMB 11950 / KT2440) protein is Glycogen synthase.